The chain runs to 92 residues: Small ribosomal subunit protein uS19 (92 aa).

The protein belongs to the universal ribosomal protein uS19 family.

Its function is as follows. Protein S19 forms a complex with S13 that binds strongly to the 16S ribosomal RNA. This chain is Small ribosomal subunit protein uS19, found in Variovorax paradoxus (strain S110).